The sequence spans 331 residues: Adenosine deaminase (331 aa).

Zn(2+) is bound by residues His12 and His14. His14, Asp16, and Gly170 together coordinate substrate. Zn(2+) is bound at residue His197. Glu200 acts as the Proton donor in catalysis. A Zn(2+)-binding site is contributed by Asp278. Asp279 is a substrate binding site.

The protein belongs to the metallo-dependent hydrolases superfamily. Adenosine and AMP deaminases family. Adenosine deaminase subfamily. The cofactor is Zn(2+).

The enzyme catalyses adenosine + H2O + H(+) = inosine + NH4(+). It catalyses the reaction 2'-deoxyadenosine + H2O + H(+) = 2'-deoxyinosine + NH4(+). In terms of biological role, catalyzes the hydrolytic deamination of adenosine and 2-deoxyadenosine. The sequence is that of Adenosine deaminase from Shewanella sp. (strain W3-18-1).